The chain runs to 279 residues: Phycobilisome rod-core linker polypeptide CpcG1 (279 aa).

Residues 11–189 (SSQNQRVEGY…YWRDRQTLNA (179 aa)) form the PBS-linker domain.

This sequence belongs to the phycobilisome linker protein family. As to quaternary structure, part of the phycobilisome, a hemidiscoidal structure that is composed of two distinct substructures: a core complex and a number of rods radiating from the core.

It localises to the cellular thylakoid membrane. Its function is as follows. Rod-core linker protein required for attachment of phycocyanin to allophycocyanin in cores of phycobilisomes. Linker polypeptides determine the state of aggregation and the location of the disk-shaped phycobiliprotein units within the phycobilisome and modulate their spectroscopic properties in order to mediate a directed and optimal energy transfer. This Nostoc sp. (strain PCC 7120 / SAG 25.82 / UTEX 2576) protein is Phycobilisome rod-core linker polypeptide CpcG1.